A 483-amino-acid chain; its full sequence is PAT complex subunit CCDC47 (483 aa).

The signal sequence occupies residues 1 to 20; sequence MKAFYAFCVVLLVFGSVSEA. Residues 21-135 are Cytoplasmic-facing; it reads KFDDFEDEED…PAHLQNSWES (115 aa). Positions 46–119 are disordered; the sequence is MEDSVTESPQ…DTSSNKNKDP (74 aa). A compositionally biased stretch (acidic residues) spans 60-104; the sequence is TEDDEDEATVELEGQDESQEGDFEDADTQEGDTESEPYDDEEFEG. Residues 105–118 are compositionally biased toward basic and acidic residues; that stretch reads YEDKPDTSSNKNKD. Residues 136 to 156 form a helical membrane-spanning segment; that stretch reads YYLEILMVTGLLAYIMNYIIG. Over 157-483 the chain is Lumenal; the sequence is KNKNSRLAQA…KMKQIKVKAM (327 aa). Asn178 carries an N-linked (GlcNAc...) asparagine glycan. The interval 424–483 is disordered; that stretch reads QRQEAAQSRREEKKRAEKERIMNEEDPEKQRRLEEAALRREQKKLEKKQMKMKQIKVKAM. The span at 430–472 shows a compositional bias: basic and acidic residues; sequence QSRREEKKRAEKERIMNEEDPEKQRRLEEAALRREQKKLEKKQ. The stretch at 450 to 483 forms a coiled coil; that stretch reads PEKQRRLEEAALRREQKKLEKKQMKMKQIKVKAM. Residues 473-483 are compositionally biased toward basic residues; it reads MKMKQIKVKAM.

This sequence belongs to the CCDC47 family. As to quaternary structure, component of the PAT complex, composed of WDR83OS/Asterix and CCDC47. The PAT complex is part of the multi-pass translocon (MPT) complex, composed of three subcomplexes, the GEL complex (composed of RAB5IF/OPTI and TMCO1), the BOS complex (composed of NCLN/Nicalin, NOMO1 and TMEM147) and the PAT complex (composed of WDR83OS/Asterix and CCDC47). The MPT complex associates with the SEC61 complex. Interacts with VCP, HSPA5, DERL1, DERL2 and SELENOS. In terms of tissue distribution, in the embryo, expressed in the endodermal layer of the yolk sac and in the small intestine.

It is found in the endoplasmic reticulum membrane. The protein localises to the rough endoplasmic reticulum membrane. Its function is as follows. Component of the multi-pass translocon (MPT) complex that mediates insertion of multi-pass membrane proteins into the lipid bilayer of membranes. The MPT complex takes over after the SEC61 complex: following membrane insertion of the first few transmembrane segments of proteins by the SEC61 complex, the MPT complex occludes the lateral gate of the SEC61 complex to promote insertion of subsequent transmembrane regions. Within the MPT complex, the PAT subcomplex sequesters any highly polar regions in the transmembrane domains away from the non-polar membrane environment until they can be buried in the interior of the fully assembled protein. Within the PAT subcomplex, CCDC47 occludes the lateral gate of the SEC61 complex. Involved in the regulation of calcium ion homeostasis in the ER. Required for proper protein degradation via the ERAD (ER-associated degradation) pathway. Has an essential role in the maintenance of ER organization during embryogenesis. This chain is PAT complex subunit CCDC47, found in Mus musculus (Mouse).